The following is a 246-amino-acid chain: Transmembrane and ubiquitin-like domain-containing protein 1 (246 aa).

Residues 2 to 30 (ALIEGVGDEVTILFSALACLLVLALAWVS) are required to release iHOPS from membranes. A helical transmembrane segment spans residues 11-31 (VTILFSALACLLVLALAWVST). A disordered region spans residues 35–102 (EGADPLPQPS…PPPPDSPQEP (68 aa)). Pro residues predominate over residues 40–50 (LPQPSGTPTPT). Residues threonine 71 and threonine 92 each carry the phosphothreonine modification. Residues serine 98 and serine 127 each carry the phosphoserine modification. The 74-residue stretch at 103-176 (LVLRLKFLND…LHCHVSTRVG (74 aa)) folds into the Ubiquitin-like domain. The next 2 membrane-spanning stretches (helical) occupy residues 195-215 (VGSL…YCQI) and 221-241 (FPLT…LLAF).

In terms of assembly, interacts with EEF1A1, GRIA2, GRIP1, CAMLG, TUBG1. Interacts with NPM1 and CDKN2A; TMUB1 can enhance interaction between NPM1 and CDKN2A and is proposed to bridge the proteins; proposed to be mediated by iHOPS. Interacts with ERLIN2 and AMFR; TMUB1 promotes the interaction of ERLIN2 with AMFR. In terms of processing, processed by regulated intramembrane proteolysis (RIP) in the N-terminus to release iHOPS from membranes.

It is found in the membrane. The protein localises to the postsynaptic cell membrane. Its subcellular location is the recycling endosome. It localises to the cytoplasm. The protein resides in the nucleus. It is found in the nucleolus. The protein localises to the cytoskeleton. Its subcellular location is the microtubule organizing center. It localises to the centrosome. Involved in sterol-regulated ubiquitination and degradation of HMG-CoA reductase HMGCR. Involved in positive regulation of AMPA-selective glutamate receptor GRIA2 recycling to the cell surface. Acts as negative regulator of hepatocyte growth during regeneration. Its function is as follows. May contribute to the regulation of translation during cell-cycle progression. May contribute to the regulation of cell proliferation. May be involved in centrosome assembly. Modulates stabilization and nucleolar localization of tumor suppressor CDKN2A and enhances association between CDKN2A and NPM1. The polypeptide is Transmembrane and ubiquitin-like domain-containing protein 1 (TMUB1) (Bos taurus (Bovine)).